Here is a 386-residue protein sequence, read N- to C-terminus: uncharacterized protein (386 aa).

An N6-(pyridoxal phosphate)lysine modification is found at Lys-185.

It belongs to the DegT/DnrJ/EryC1 family. It depends on pyridoxal 5'-phosphate as a cofactor.

This is an uncharacterized protein from Methanocaldococcus jannaschii (strain ATCC 43067 / DSM 2661 / JAL-1 / JCM 10045 / NBRC 100440) (Methanococcus jannaschii).